The sequence spans 302 residues: Glutaminase (302 aa).

Substrate-binding residues include serine 61, asparagine 111, glutamate 155, asparagine 162, tyrosine 186, tyrosine 238, and valine 256.

Belongs to the glutaminase family. As to quaternary structure, homotetramer.

It catalyses the reaction L-glutamine + H2O = L-glutamate + NH4(+). The polypeptide is Glutaminase (Pseudomonas fluorescens (strain SBW25)).